The chain runs to 212 residues: Large ribosomal subunit protein uL3 (212 aa).

At Gln154 the chain carries N5-methylglutamine.

It belongs to the universal ribosomal protein uL3 family. Part of the 50S ribosomal subunit. Forms a cluster with proteins L14 and L19. Methylated by PrmB.

One of the primary rRNA binding proteins, it binds directly near the 3'-end of the 23S rRNA, where it nucleates assembly of the 50S subunit. The chain is Large ribosomal subunit protein uL3 from Hydrogenovibrio crunogenus (strain DSM 25203 / XCL-2) (Thiomicrospira crunogena).